The following is a 590-amino-acid chain: Rho GTPase-activating protein 36 (590 aa).

One can recognise a Rho-GAP domain in the interval 214–414; that stretch reads MSLNPIAQQI…AMIDNWDILF (201 aa). The interval 526–590 is disordered; the sequence is IPNNEDTDSD…KGKFATRFFP (65 aa).

In terms of assembly, may interacts (via the Rho-GAP domain) with the active form of RAC1.

In terms of biological role, GTPase activator for the Rho-type GTPases by converting them to an inactive GDP-bound state. The chain is Rho GTPase-activating protein 36 (Arhgap36) from Mus musculus (Mouse).